Consider the following 106-residue polypeptide: Putative membrane protein insertion efficiency factor (106 aa).

Belongs to the UPF0161 family.

The protein resides in the cell inner membrane. Could be involved in insertion of integral membrane proteins into the membrane. The sequence is that of Putative membrane protein insertion efficiency factor from Acinetobacter baumannii (strain AB307-0294).